A 485-amino-acid chain; its full sequence is Programmed cell death protein 7 (485 aa).

The interval 1-133 is disordered; that stretch reads MALPPFFGQG…EAPPPPADVL (133 aa). The segment covering 12-48 has biased composition (pro residues); it reads PGPPPPQPPPPAPFGCPPPPLPSPAFPPPLPQRPGPF. Positions 49-71 are enriched in low complexity; sequence PGASAPFLQPPLALQPRASAEAS. Composition is skewed to pro residues over residues 82-96 and 109-130; these read PVPP…PQCR and PPPP…PPPA. 2 coiled-coil regions span residues 232–335 and 362–411; these read VGEA…AAAR and RSEL…ESKL.

As to quaternary structure, interacts with RBM40. Component of the U11/U12 snRNPs that are part of the U12-type spliceosome.

It is found in the nucleus. In terms of biological role, promotes apoptosis when overexpressed. The protein is Programmed cell death protein 7 (PDCD7) of Homo sapiens (Human).